The primary structure comprises 328 residues: MKFGIEFVPADPALKIAYYAKLSEQQGFDYVWITDHYNNRDVYSTLTVLALNTNSIKIGSGVTNSYTRNPAITASSIASIAEISGGRAVLGLGPGDKATFDAMGIAWEKPLATTKEAIQAIRDFIDGKKVSMDGEMVKFAGAKLAFKAGKIPIYMGAQGPKMLELAGEVADGVLINASHPKDFEVAVEQIRKGAEKVGRDPSEVDVTAYACFSIDKDPVKAVNAAKVVVAFIVAGSPDLVLERHGISVEAKKQIGDAIAKGDFGSLMGGLVTPQMIEAFSICGTPEDCMKRIKDLEAIGVTQIVAGSPIGPDKEKAIKLIGKEIIAKM.

The protein belongs to the mer family.

It is found in the cytoplasm. The catalysed reaction is 5-methyl-5,6,7,8-tetrahydromethanopterin + oxidized coenzyme F420-(gamma-L-Glu)(n) + H(+) = 5,10-methylenetetrahydromethanopterin + reduced coenzyme F420-(gamma-L-Glu)(n). The protein operates within one-carbon metabolism; methanogenesis from CO(2); methyl-coenzyme M from 5,10-methylene-5,6,7,8-tetrahydromethanopterin: step 1/2. Catalyzes the reversible reduction of methylene-H(4)MPT to methyl-H(4)MPT. This chain is 5,10-methylenetetrahydromethanopterin reductase, found in Methanosarcina mazei (strain ATCC BAA-159 / DSM 3647 / Goe1 / Go1 / JCM 11833 / OCM 88) (Methanosarcina frisia).